Reading from the N-terminus, the 283-residue chain is Bis(5'-nucleosyl)-tetraphosphatase, symmetrical (283 aa).

The protein belongs to the Ap4A hydrolase family.

The enzyme catalyses P(1),P(4)-bis(5'-adenosyl) tetraphosphate + H2O = 2 ADP + 2 H(+). Hydrolyzes diadenosine 5',5'''-P1,P4-tetraphosphate to yield ADP. The chain is Bis(5'-nucleosyl)-tetraphosphatase, symmetrical from Serratia proteamaculans (strain 568).